Consider the following 325-residue polypeptide: NADH-cytochrome b5 reductase 2 (325 aa).

Residues 32 to 48 (VPLYGGLALAAGGAYYY) form a helical membrane-spanning segment. An FAD-binding FR-type domain is found at 74 to 179 (QGWVDLKLAG…KGPIPKYPWE (106 aa)). Residue 182 to 217 (KHDHICMIAGGTGITPMYQIIRKIFNNPNDKTKVTL) participates in FAD binding.

The protein belongs to the flavoprotein pyridine nucleotide cytochrome reductase family. It depends on FAD as a cofactor.

It is found in the mitochondrion outer membrane. It carries out the reaction 2 Fe(III)-[cytochrome b5] + NADH = 2 Fe(II)-[cytochrome b5] + NAD(+) + H(+). In terms of biological role, may mediate the reduction of outer membrane cytochrome b5. The polypeptide is NADH-cytochrome b5 reductase 2 (MCR1) (Coccidioides immitis (strain RS) (Valley fever fungus)).